Consider the following 577-residue polypeptide: Protein GPR108 (577 aa).

The first 34 residues, Met1–Gly34, serve as a signal peptide directing secretion. Residues Asn59 and Asn111 are each glycosylated (N-linked (GlcNAc...) asparagine). The segment at Leu144–Asp224 is disordered. 2 N-linked (GlcNAc...) asparagine glycosylation sites follow: Asn233 and Asn237. The next 7 helical transmembrane spans lie at Leu296–Cys316, Ile325–Ile345, Leu369–Val389, Ile400–Ser420, Ile434–Ile454, Val482–Val502, and Trp506–Gly526.

This sequence belongs to the LU7TM family.

It localises to the golgi apparatus. The protein localises to the cis-Golgi network membrane. Its subcellular location is the trans-Golgi network membrane. It is found in the golgi apparatus membrane. Functionally, may play a role in intracellular immune modulation by activating NF-kappaB response and attenuating Toll-like-receptor response. This Rattus norvegicus (Rat) protein is Protein GPR108 (Gpr108).